The following is a 402-amino-acid chain: Bisdemethoxycurcumin synthase (402 aa).

Cys-174 acts as the Acyl-thioester intermediate in catalysis.

This sequence belongs to the thiolase-like superfamily. Chalcone/stilbene synthases family. In terms of assembly, homodimer.

The enzyme catalyses 2 4-coumaroyl-CoA + malonyl-CoA + H2O + H(+) = bisdemethoxycurcumin + 2 CO2 + 3 CoA. It participates in secondary metabolite biosynthesis; flavonoid biosynthesis. Plant-specific type III polyketide synthase (PKS) that catalyzes the one-pot formation of the C6-C7-C6 diarylheptanoid scaffold of bisdemethoxycurcumin by the condensation of two molecules of 4-coumaroyl-CoA and one molecule of malonyl-CoA. The protein is Bisdemethoxycurcumin synthase of Oryza sativa subsp. japonica (Rice).